The primary structure comprises 433 residues: Chaperone SurA (433 aa).

The signal sequence occupies residues 1–20 (MKNWRTLIFGLMFSVSTAFA). PpiC domains are found at residues 171–272 (DTEL…KVND) and 282–382 (VTEV…QLLD).

Its subcellular location is the periplasm. The catalysed reaction is [protein]-peptidylproline (omega=180) = [protein]-peptidylproline (omega=0). Functionally, chaperone involved in the correct folding and assembly of outer membrane proteins. Recognizes specific patterns of aromatic residues and the orientation of their side chains, which are found more frequently in integral outer membrane proteins. May act in both early periplasmic and late outer membrane-associated steps of protein maturation. The polypeptide is Chaperone SurA (Photorhabdus laumondii subsp. laumondii (strain DSM 15139 / CIP 105565 / TT01) (Photorhabdus luminescens subsp. laumondii)).